The following is a 199-amino-acid chain: ATP-dependent Clp protease proteolytic subunit (199 aa).

The active-site Nucleophile is the Ser-98. His-123 is a catalytic residue.

This sequence belongs to the peptidase S14 family. Fourteen ClpP subunits assemble into 2 heptameric rings which stack back to back to give a disk-like structure with a central cavity, resembling the structure of eukaryotic proteasomes.

Its subcellular location is the cytoplasm. The catalysed reaction is Hydrolysis of proteins to small peptides in the presence of ATP and magnesium. alpha-casein is the usual test substrate. In the absence of ATP, only oligopeptides shorter than five residues are hydrolyzed (such as succinyl-Leu-Tyr-|-NHMec, and Leu-Tyr-Leu-|-Tyr-Trp, in which cleavage of the -Tyr-|-Leu- and -Tyr-|-Trp bonds also occurs).. In terms of biological role, cleaves peptides in various proteins in a process that requires ATP hydrolysis. Has a chymotrypsin-like activity. Plays a major role in the degradation of misfolded proteins. The chain is ATP-dependent Clp protease proteolytic subunit from Clostridium botulinum (strain Alaska E43 / Type E3).